The chain runs to 259 residues: tRNA pseudouridine synthase A (259 aa).

D52 functions as the Nucleophile in the catalytic mechanism. Substrate is bound at residue Y111.

Belongs to the tRNA pseudouridine synthase TruA family. Homodimer.

It catalyses the reaction uridine(38/39/40) in tRNA = pseudouridine(38/39/40) in tRNA. Functionally, formation of pseudouridine at positions 38, 39 and 40 in the anticodon stem and loop of transfer RNAs. The protein is tRNA pseudouridine synthase A of Ruegeria sp. (strain TM1040) (Silicibacter sp.).